Consider the following 141-residue polypeptide: MTRFWIGVVSKEHVLRGVEGGFCQVCHGKKAPLNRMKKGDYLLYYSPKYQMNDQEKLQAFTAVGKILDDTAYQVEMFEDFFPFRRDVSYYQPVKDCPIEQIRQHPQWRQYASQLRYGHFEVSKDFFLYVFDQMKVDRSRNN.

This sequence belongs to the UPF0310 family.

In Streptococcus gordonii (strain Challis / ATCC 35105 / BCRC 15272 / CH1 / DL1 / V288), this protein is UPF0310 protein SGO_1818.